The chain runs to 693 residues: MSVMGSGLFFFVVGPSGSGKDTLIEGAKAALGPTGRYVFARRAITRPADAGGEAHEALSVDQFDAVLAQGGFLIHWEAHGLKYGLRATLLDDMAAGRHVIANGSRAMVAALAERVPHLVVVEITAPEAVLAERLKGRGREGAENIAARLERKVPPFPESVTVIQVPNDSTPRAGIEKFVAALVAQTARLRLVRMAIETGRRNVAFLARGNTVVAAPDYLGPGRVDLIGEGRSIRAEVALVGDALLPSDAVGLSSEAFGALGLPEGAELVLTRTPVPESRAALRRKIQGATLDEGAYAQVVGDIVEGRYPDSEVAGFLVAADRSLSDDEVLALAKVRAKFASRITWDEPMVVDKHSMGGIPGSRITMIVVPIVAAHGLAIPKTSSRAITSAAGTADAMETLARVDLDSAEVRRTVERARGCIAWNGRLSHSALDDVMNAITRPLGLDSTRWSVASILSKKLAAGSTHVVIDLPFGARARVKGAGEAHEMARLFEQVGAGLGLTVEAIPTDGSAPIGRGIGPALEVRDVLWVLEDHSEAPPDLKEKALFFASRILAWDPAVGPDRARARAEELLASGAARAALERIVEAQGRWSEPVRPARLTHTVTAQNDGQVSDIDGFAVAGIARLAGAPLDKGAGIDLKARVGDVVRAGDPLFVIHASTAADLEAAAGAALAFDGYGIMMDGKAFRRINPER.

The interval 1 to 193 (MSVMGSGLFF…AQTARLRLVR (193 aa)) is ribose 1,5-bisphosphokinase. 14 to 21 (GPSGSGKD) contributes to the ATP binding site. The interval 194–693 (MAIETGRRNV…KAFRRINPER (500 aa)) is thymidinephosphorylase.

It in the N-terminal section; belongs to the ribose 1,5-bisphosphokinase family. In the C-terminal section; belongs to the thymidine/pyrimidine-nucleoside phosphorylase family. Type 2 subfamily.

It carries out the reaction alpha-D-ribose 1,5-bisphosphate + ATP = 5-phospho-alpha-D-ribose 1-diphosphate + ADP. The enzyme catalyses thymidine + phosphate = 2-deoxy-alpha-D-ribose 1-phosphate + thymine. Its pathway is metabolic intermediate biosynthesis; 5-phospho-alpha-D-ribose 1-diphosphate biosynthesis; 5-phospho-alpha-D-ribose 1-diphosphate from D-ribose 5-phosphate (route II): step 3/3. Functionally, catalyzes the phosphorylation of ribose 1,5-bisphosphate to 5-phospho-D-ribosyl alpha-1-diphosphate (PRPP). The protein is Bifunctional ribose 1,5-bisphosphokinase-thymidine phosphorylase (phnN) of Azorhizobium caulinodans (strain ATCC 43989 / DSM 5975 / JCM 20966 / LMG 6465 / NBRC 14845 / NCIMB 13405 / ORS 571).